Reading from the N-terminus, the 262-residue chain is Acyl-[acyl-carrier-protein]--UDP-N-acetylglucosamine O-acyltransferase (262 aa).

The protein belongs to the transferase hexapeptide repeat family. LpxA subfamily. As to quaternary structure, homotrimer.

The protein localises to the cytoplasm. It catalyses the reaction a (3R)-hydroxyacyl-[ACP] + UDP-N-acetyl-alpha-D-glucosamine = a UDP-3-O-[(3R)-3-hydroxyacyl]-N-acetyl-alpha-D-glucosamine + holo-[ACP]. The protein operates within glycolipid biosynthesis; lipid IV(A) biosynthesis; lipid IV(A) from (3R)-3-hydroxytetradecanoyl-[acyl-carrier-protein] and UDP-N-acetyl-alpha-D-glucosamine: step 1/6. Functionally, involved in the biosynthesis of lipid A, a phosphorylated glycolipid that anchors the lipopolysaccharide to the outer membrane of the cell. The polypeptide is Acyl-[acyl-carrier-protein]--UDP-N-acetylglucosamine O-acyltransferase (Yersinia enterocolitica).